A 346-amino-acid polypeptide reads, in one-letter code: Ferredoxin--NADP reductase (346 aa).

FAD contacts are provided by Glu35, Gln43, Tyr48, Val88, Phe122, Asp287, and Thr327.

Belongs to the ferredoxin--NADP reductase type 2 family. In terms of assembly, homodimer. Requires FAD as cofactor.

The enzyme catalyses 2 reduced [2Fe-2S]-[ferredoxin] + NADP(+) + H(+) = 2 oxidized [2Fe-2S]-[ferredoxin] + NADPH. The chain is Ferredoxin--NADP reductase from Oenococcus oeni (strain ATCC BAA-331 / PSU-1).